The chain runs to 698 residues: DNA ligase (698 aa).

Residues 47–51 (DAQYD), 96–97 (SL), and glutamate 128 each bind NAD(+). Residue lysine 130 is the N6-AMP-lysine intermediate of the active site. NAD(+) contacts are provided by arginine 151, glutamate 186, lysine 303, and lysine 327. Cysteine 422, cysteine 425, cysteine 440, and cysteine 446 together coordinate Zn(2+). Positions 620 to 698 (GDNLLLSNQT…EEEWIKMVNE (79 aa)) constitute a BRCT domain.

The protein belongs to the NAD-dependent DNA ligase family. LigA subfamily. Mg(2+) serves as cofactor. It depends on Mn(2+) as a cofactor.

The catalysed reaction is NAD(+) + (deoxyribonucleotide)n-3'-hydroxyl + 5'-phospho-(deoxyribonucleotide)m = (deoxyribonucleotide)n+m + AMP + beta-nicotinamide D-nucleotide.. Functionally, DNA ligase that catalyzes the formation of phosphodiester linkages between 5'-phosphoryl and 3'-hydroxyl groups in double-stranded DNA using NAD as a coenzyme and as the energy source for the reaction. It is essential for DNA replication and repair of damaged DNA. The chain is DNA ligase from Orientia tsutsugamushi (strain Boryong) (Rickettsia tsutsugamushi).